Here is a 366-residue protein sequence, read N- to C-terminus: UDP-N-acetylglucosamine--N-acetylmuramyl-(pentapeptide) pyrophosphoryl-undecaprenol N-acetylglucosamine transferase (366 aa).

UDP-N-acetyl-alpha-D-glucosamine-binding positions include 10–12 (TGG), N124, R166, S196, and Q297.

Belongs to the glycosyltransferase 28 family. MurG subfamily.

It localises to the cell membrane. The catalysed reaction is di-trans,octa-cis-undecaprenyl diphospho-N-acetyl-alpha-D-muramoyl-L-alanyl-D-glutamyl-meso-2,6-diaminopimeloyl-D-alanyl-D-alanine + UDP-N-acetyl-alpha-D-glucosamine = di-trans,octa-cis-undecaprenyl diphospho-[N-acetyl-alpha-D-glucosaminyl-(1-&gt;4)]-N-acetyl-alpha-D-muramoyl-L-alanyl-D-glutamyl-meso-2,6-diaminopimeloyl-D-alanyl-D-alanine + UDP + H(+). The protein operates within cell wall biogenesis; peptidoglycan biosynthesis. Its function is as follows. Cell wall formation. Catalyzes the transfer of a GlcNAc subunit on undecaprenyl-pyrophosphoryl-MurNAc-pentapeptide (lipid intermediate I) to form undecaprenyl-pyrophosphoryl-MurNAc-(pentapeptide)GlcNAc (lipid intermediate II). This Alkaliphilus metalliredigens (strain QYMF) protein is UDP-N-acetylglucosamine--N-acetylmuramyl-(pentapeptide) pyrophosphoryl-undecaprenol N-acetylglucosamine transferase.